The chain runs to 562 residues: Potassium-transporting ATPase potassium-binding subunit (562 aa).

Helical transmembrane passes span 5–25 (AFLL…PLGS), 63–83 (AAAI…LLMA), 132–152 (GLTV…FALI), 175–195 (LYVL…QGVL), 250–270 (LSNI…CFAF), 279–299 (QGHA…AVVM), 327–347 (FGVL…TGAV), 356–376 (ALGG…FGGV), 379–399 (GLYG…LMIG), 416–436 (MTAL…ALAL), 483–503 (VLLA…VLAI), and 526–546 (LFIG…FIPA).

Belongs to the KdpA family. The system is composed of three essential subunits: KdpA, KdpB and KdpC.

It is found in the cell inner membrane. In terms of biological role, part of the high-affinity ATP-driven potassium transport (or Kdp) system, which catalyzes the hydrolysis of ATP coupled with the electrogenic transport of potassium into the cytoplasm. This subunit binds the periplasmic potassium ions and delivers the ions to the membrane domain of KdpB through an intramembrane tunnel. This is Potassium-transporting ATPase potassium-binding subunit from Pectobacterium carotovorum subsp. carotovorum (strain PC1).